Here is a 303-residue protein sequence, read N- to C-terminus: UDP-3-O-acyl-N-acetylglucosamine deacetylase (303 aa).

Histidine 78, histidine 237, and aspartate 241 together coordinate Zn(2+). Histidine 264 (proton donor) is an active-site residue.

It belongs to the LpxC family. Zn(2+) serves as cofactor.

The enzyme catalyses a UDP-3-O-[(3R)-3-hydroxyacyl]-N-acetyl-alpha-D-glucosamine + H2O = a UDP-3-O-[(3R)-3-hydroxyacyl]-alpha-D-glucosamine + acetate. It functions in the pathway glycolipid biosynthesis; lipid IV(A) biosynthesis; lipid IV(A) from (3R)-3-hydroxytetradecanoyl-[acyl-carrier-protein] and UDP-N-acetyl-alpha-D-glucosamine: step 2/6. Functionally, catalyzes the hydrolysis of UDP-3-O-myristoyl-N-acetylglucosamine to form UDP-3-O-myristoylglucosamine and acetate, the committed step in lipid A biosynthesis. The polypeptide is UDP-3-O-acyl-N-acetylglucosamine deacetylase (Xanthomonas axonopodis pv. citri (strain 306)).